The sequence spans 232 residues: Fibrillarin-like rRNA/tRNA 2'-O-methyltransferase (232 aa).

S-adenosyl-L-methionine-binding positions include 89–90 (TT), 108–109 (EF), 133–134 (DA), and 153–156 (DIAQ).

Belongs to the methyltransferase superfamily. Fibrillarin family. In terms of assembly, interacts with nop5. Component of box C/D small ribonucleoprotein (sRNP) particles that contain rpl7ae, FlpA and nop5, plus a guide RNA.

Functionally, involved in pre-rRNA and tRNA processing. Utilizes the methyl donor S-adenosyl-L-methionine to catalyze the site-specific 2'-hydroxyl methylation of ribose moieties in rRNA and tRNA. Site specificity is provided by a guide RNA that base pairs with the substrate. Methylation occurs at a characteristic distance from the sequence involved in base pairing with the guide RNA. The protein is Fibrillarin-like rRNA/tRNA 2'-O-methyltransferase of Saccharolobus islandicus (strain L.S.2.15 / Lassen #1) (Sulfolobus islandicus).